Here is a 391-residue protein sequence, read N- to C-terminus: uncharacterized protein (391 aa).

2 WD repeats span residues 137-179 and 182-222; these read VNDI…PILA and PLSS…SAEE.

Its subcellular location is the cytoplasm. It localises to the nucleus. This is an uncharacterized protein from Schizosaccharomyces pombe (strain 972 / ATCC 24843) (Fission yeast).